The primary structure comprises 100 residues: Urease subunit gamma (100 aa).

This sequence belongs to the urease gamma subunit family. Heterotrimer of UreA (gamma), UreB (beta) and UreC (alpha) subunits. Three heterotrimers associate to form the active enzyme.

Its subcellular location is the cytoplasm. It carries out the reaction urea + 2 H2O + H(+) = hydrogencarbonate + 2 NH4(+). It participates in nitrogen metabolism; urea degradation; CO(2) and NH(3) from urea (urease route): step 1/1. In Thioalkalivibrio sulfidiphilus (strain HL-EbGR7), this protein is Urease subunit gamma.